The primary structure comprises 399 residues: Trimethyllysine dioxygenase (399 aa).

Fe cation is bound by residues His-214, Asp-216, and His-360.

The protein belongs to the gamma-BBH/TMLD family. Requires Fe(2+) as cofactor. The cofactor is L-ascorbate.

The protein resides in the cytoplasm. It carries out the reaction N(6),N(6),N(6)-trimethyl-L-lysine + 2-oxoglutarate + O2 = (3S)-3-hydroxy-N(6),N(6),N(6)-trimethyl-L-lysine + succinate + CO2. Its pathway is amine and polyamine biosynthesis; carnitine biosynthesis. In terms of biological role, converts trimethyllysine (TML) into hydroxytrimethyllysine (HTML). This chain is Trimethyllysine dioxygenase, found in Meyerozyma guilliermondii (strain ATCC 6260 / CBS 566 / DSM 6381 / JCM 1539 / NBRC 10279 / NRRL Y-324) (Yeast).